Reading from the N-terminus, the 466-residue chain is tRNA-2-methylthio-N(6)-dimethylallyladenosine synthase (466 aa).

Residues 3-123 form the MTTase N-terminal domain; that stretch reads KKLYIKTYGC…LPEMVARAVR (121 aa). 6 residues coordinate [4Fe-4S] cluster: cysteine 12, cysteine 48, cysteine 86, cysteine 162, cysteine 166, and cysteine 169. One can recognise a Radical SAM core domain in the interval 148–381; it reads SPAGPSAFLS…QQLLTAQQTA (234 aa). The TRAM domain maps to 384–446; the sequence is TACVGRVQPV…ANSLSGTVVV (63 aa).

The protein belongs to the methylthiotransferase family. MiaB subfamily. As to quaternary structure, monomer. [4Fe-4S] cluster serves as cofactor.

The protein localises to the cytoplasm. The catalysed reaction is N(6)-dimethylallyladenosine(37) in tRNA + (sulfur carrier)-SH + AH2 + 2 S-adenosyl-L-methionine = 2-methylsulfanyl-N(6)-dimethylallyladenosine(37) in tRNA + (sulfur carrier)-H + 5'-deoxyadenosine + L-methionine + A + S-adenosyl-L-homocysteine + 2 H(+). Functionally, catalyzes the methylthiolation of N6-(dimethylallyl)adenosine (i(6)A), leading to the formation of 2-methylthio-N6-(dimethylallyl)adenosine (ms(2)i(6)A) at position 37 in tRNAs that read codons beginning with uridine. In Rhodospirillum centenum (strain ATCC 51521 / SW), this protein is tRNA-2-methylthio-N(6)-dimethylallyladenosine synthase.